The chain runs to 122 residues: uncharacterized protein (122 aa).

2 helical membrane-spanning segments follow: residues proline 43–isoleucine 63 and alanine 76–phenylalanine 96.

Its subcellular location is the membrane. This is an uncharacterized protein from Schizosaccharomyces pombe (strain 972 / ATCC 24843) (Fission yeast).